Consider the following 346-residue polypeptide: 3 beta-hydroxysteroid dehydrogenase/Delta 5--&gt;4-isomerase (346 aa).

Tyr147 (proton acceptor) is an active-site residue. Residue Lys151 coordinates NAD(+).

It belongs to the 3-beta-HSD family.

It carries out the reaction a 3beta-hydroxy-Delta(5)-steroid + NAD(+) = a 3-oxo-Delta(5)-steroid + NADH + H(+). It catalyses the reaction a 3-oxo-Delta(5)-steroid = a 3-oxo-Delta(4)-steroid. The protein operates within lipid metabolism; steroid biosynthesis. Its function is as follows. Catalyzes the oxidative conversion of Delta(5)-ene-3-beta-hydroxy steroid, and the oxidative conversion of ketosteroids. The 3-beta-HSD enzymatic system plays a crucial role in the biosynthesis of all classes of hormonal steroids. During viral infection, steroid production contributes to virulence by inhibiting the host inflammatory response. The protein is 3 beta-hydroxysteroid dehydrogenase/Delta 5--&gt;4-isomerase (OPG174) of Homo sapiens (Human).